The following is a 692-amino-acid chain: Hexamerin-1.1 (692 aa).

The signal sequence occupies residues 1–18 (MKLLILAVAISLAVLASG). Residue N203 is glycosylated (N-linked (GlcNAc...) asparagine).

This sequence belongs to the hemocyanin family. In terms of assembly, homohexamer. Larval fat body.

The protein localises to the secreted. It localises to the extracellular space. Larval storage protein (LSP) which may serve as a store of amino acids for synthesis of adult proteins. This Anopheles gambiae (African malaria mosquito) protein is Hexamerin-1.1 (HexA).